The sequence spans 138 residues: Spermidine export protein MdtJ (138 aa).

4 helical membrane passes run 1–21, 30–50, 54–74, and 81–101; these read MIYW…TLSM, VVGM…LAMA, VALG…ITVF, and ESLS…IMLI.

Belongs to the drug/metabolite transporter (DMT) superfamily. Small multidrug resistance (SMR) (TC 2.A.7.1) family. MdtJ subfamily. Forms a complex with MdtI.

The protein localises to the cell inner membrane. Functionally, catalyzes the excretion of spermidine. The polypeptide is Spermidine export protein MdtJ (Photorhabdus laumondii subsp. laumondii (strain DSM 15139 / CIP 105565 / TT01) (Photorhabdus luminescens subsp. laumondii)).